The primary structure comprises 160 residues: Serine-protein kinase RsbW (160 aa).

This sequence belongs to the anti-sigma-factor family.

It catalyses the reaction L-seryl-[protein] + ATP = O-phospho-L-seryl-[protein] + ADP + H(+). The enzyme catalyses L-threonyl-[protein] + ATP = O-phospho-L-threonyl-[protein] + ADP + H(+). In terms of biological role, negative regulator of sigma-B activity. Phosphorylates and inactivates its specific antagonist protein, RsbV. Upon phosphorylation of RsbV, RsbW is released and binds to sigma-B, thereby blocking its ability to form an RNA polymerase holoenzyme (E-sigma-B). In Bacillus licheniformis, this protein is Serine-protein kinase RsbW.